Here is a 492-residue protein sequence, read N- to C-terminus: Monocarboxylate transporter 3 (492 aa).

At 1–14 the chain is on the cytoplasmic side; it reads MGAGGPRRGAGPPD. A helical transmembrane segment spans residues 15-35; the sequence is GGWGWVVLGACFVVTGFAYGF. Topologically, residues 36-58 are extracellular; the sequence is PKAVSVFFRELKRDFGAGYSDTA. A helical transmembrane segment spans residues 59 to 79; the sequence is WVSSIMLAMLYGTGPLSSILV. The Cytoplasmic segment spans residues 80–85; the sequence is TRFGCR. A helical transmembrane segment spans residues 86–106; sequence PVMLAGGLLASAGMILASFAS. Residues 107-115 are Extracellular-facing; the sequence is RLVELYLTA. Residues 116–136 form a helical membrane-spanning segment; sequence GVLTGLGLALNFQPSLIMLGL. Topologically, residues 137-146 are cytoplasmic; the sequence is YFERRRPLAN. Residues 147-167 form a helical membrane-spanning segment; it reads GLAAAGSPVFLSMLSPLGQLL. At 168–172 the chain is on the extracellular side; it reads GERFG. The chain crosses the membrane as a helical span at residues 173-193; sequence WRGGFLLFGGLLLHCCACGAV. Residues 194–228 are Cytoplasmic-facing; the sequence is MRPPPGPPPRRDPSPHGGPARRRRLLDVAVCTDRA. Residues 229–249 form a helical membrane-spanning segment; it reads FVVYVVTKFLMALGLFVPAIL. Residues 250-257 lie on the Extracellular side of the membrane; the sequence is LVNYAKDA. The helical transmembrane segment at 258-278 threads the bilayer; that stretch reads GVPDAEAAFLLSIVGFVDIVA. Over 279 to 293 the chain is Cytoplasmic; that stretch reads RPACGALAGLGRLRP. Residues 294–314 form a helical membrane-spanning segment; that stretch reads HVPYLFSLALLANGLTDLISA. At 315-318 the chain is on the extracellular side; that stretch reads RARS. The chain crosses the membrane as a helical span at residues 319–339; that stretch reads YGTLVAFCIAFGLSYGMVGAL. The Cytoplasmic segment spans residues 340 to 352; sequence QFEVLMATVGAPR. Residues 353-373 form a helical membrane-spanning segment; that stretch reads FPSALGLVLLVEAVAVLIGPP. The Extracellular portion of the chain corresponds to 374–386; it reads SAGRLVDALKNYE. A helical membrane pass occupies residues 387 to 407; it reads IIFYLAGSEVALAGVFMAVTT. Topologically, residues 408 to 492 are cytoplasmic; the sequence is YCCLRCSKNI…GGHEARGQKA (85 aa). Positions 419–492 are disordered; it reads SGRSAEGGAS…GGHEARGQKA (74 aa). 2 basolateral sorting signal regions span residues 426 to 460 and 461 to 482; these read GASD…VLSP and RAGS…HESI. The segment covering 476–492 has biased composition (basic and acidic residues); it reads ELDHESIGGHEARGQKA.

It belongs to the major facilitator superfamily. Monocarboxylate porter (TC 2.A.1.13) family. Expressed exclusively in retinal pigment epithelium and choroid plexus epithelium.

Its subcellular location is the basolateral cell membrane. The catalysed reaction is (S)-lactate(in) + H(+)(in) = (S)-lactate(out) + H(+)(out). Probable retinal pigment epithelium (RPE)-specific proton-coupled L-lactate transporter. May facilitate transport of lactate and H(+) out of the retina and could therefore play an essential role in maintenance of metabolic and ionic homeostasis of the outer retina. In Mus musculus (Mouse), this protein is Monocarboxylate transporter 3 (Slc16a8).